A 252-amino-acid polypeptide reads, in one-letter code: Chitooligosaccharide deacetylase (252 aa).

The Mg(2+) site is built by histidine 61 and histidine 125.

This sequence belongs to the YdjC deacetylase family. ChbG subfamily. Homodimer. The cofactor is Mg(2+).

Its subcellular location is the cytoplasm. The catalysed reaction is N,N'-diacetylchitobiose + H2O = N-acetyl-beta-D-glucosaminyl-(1-&gt;4)-D-glucosamine + acetate. The enzyme catalyses diacetylchitobiose-6'-phosphate + H2O = N'-monoacetylchitobiose-6'-phosphate + acetate. Its pathway is glycan degradation; chitin degradation. Involved in the degradation of chitin. ChbG is essential for growth on the acetylated chitooligosaccharides chitobiose and chitotriose but is dispensable for growth on cellobiose and chitosan dimer, the deacetylated form of chitobiose. Deacetylation of chitobiose-6-P and chitotriose-6-P is necessary for both the activation of the chb promoter by the regulatory protein ChbR and the hydrolysis of phosphorylated beta-glucosides by the phospho-beta-glucosidase ChbF. Catalyzes the removal of only one acetyl group from chitobiose-6-P to yield monoacetylchitobiose-6-P, the inducer of ChbR and the substrate of ChbF. The chain is Chitooligosaccharide deacetylase from Escherichia fergusonii (strain ATCC 35469 / DSM 13698 / CCUG 18766 / IAM 14443 / JCM 21226 / LMG 7866 / NBRC 102419 / NCTC 12128 / CDC 0568-73).